The sequence spans 506 residues: Histidine ammonia-lyase (506 aa).

The 5-imidazolinone (Ala-Gly) cross-link spans 144–146 (ASG). Serine 145 is modified (2,3-didehydroalanine (Ser)).

It belongs to the PAL/histidase family. In terms of processing, contains an active site 4-methylidene-imidazol-5-one (MIO), which is formed autocatalytically by cyclization and dehydration of residues Ala-Ser-Gly.

It localises to the cytoplasm. It catalyses the reaction L-histidine = trans-urocanate + NH4(+). Its pathway is amino-acid degradation; L-histidine degradation into L-glutamate; N-formimidoyl-L-glutamate from L-histidine: step 1/3. The chain is Histidine ammonia-lyase from Legionella pneumophila (strain Lens).